We begin with the raw amino-acid sequence, 634 residues long: 1-deoxy-D-xylulose-5-phosphate synthase (634 aa).

Thiamine diphosphate-binding positions include H79 and 120-122 (GHA). Mg(2+) is bound at residue D151. Residues 152 to 153 (GS), N180, Y292, and E376 each bind thiamine diphosphate. Position 180 (N180) interacts with Mg(2+).

The protein belongs to the transketolase family. DXPS subfamily. As to quaternary structure, homodimer. The cofactor is Mg(2+). It depends on thiamine diphosphate as a cofactor.

The catalysed reaction is D-glyceraldehyde 3-phosphate + pyruvate + H(+) = 1-deoxy-D-xylulose 5-phosphate + CO2. The protein operates within metabolic intermediate biosynthesis; 1-deoxy-D-xylulose 5-phosphate biosynthesis; 1-deoxy-D-xylulose 5-phosphate from D-glyceraldehyde 3-phosphate and pyruvate: step 1/1. In terms of biological role, catalyzes the acyloin condensation reaction between C atoms 2 and 3 of pyruvate and glyceraldehyde 3-phosphate to yield 1-deoxy-D-xylulose-5-phosphate (DXP). This chain is 1-deoxy-D-xylulose-5-phosphate synthase, found in Porphyromonas gingivalis (strain ATCC BAA-308 / W83).